A 442-amino-acid polypeptide reads, in one-letter code: 3-phosphoshikimate 1-carboxyvinyltransferase (442 aa).

K25, S26, and R30 together coordinate 3-phosphoshikimate. Residue K25 coordinates phosphoenolpyruvate. Phosphoenolpyruvate contacts are provided by G96 and R124. S171, S172, Q173, S203, D325, and K352 together coordinate 3-phosphoshikimate. Q173 is a binding site for phosphoenolpyruvate. The Proton acceptor role is filled by D325. Residues R356, R400, and K425 each contribute to the phosphoenolpyruvate site.

Belongs to the EPSP synthase family. In terms of assembly, monomer.

The protein localises to the cytoplasm. The catalysed reaction is 3-phosphoshikimate + phosphoenolpyruvate = 5-O-(1-carboxyvinyl)-3-phosphoshikimate + phosphate. The protein operates within metabolic intermediate biosynthesis; chorismate biosynthesis; chorismate from D-erythrose 4-phosphate and phosphoenolpyruvate: step 6/7. In terms of biological role, catalyzes the transfer of the enolpyruvyl moiety of phosphoenolpyruvate (PEP) to the 5-hydroxyl of shikimate-3-phosphate (S3P) to produce enolpyruvyl shikimate-3-phosphate and inorganic phosphate. This Bordetella pertussis (strain Tohama I / ATCC BAA-589 / NCTC 13251) protein is 3-phosphoshikimate 1-carboxyvinyltransferase.